The sequence spans 130 residues: Small ribosomal subunit protein uS9 (130 aa).

It belongs to the universal ribosomal protein uS9 family.

This chain is Small ribosomal subunit protein uS9, found in Carboxydothermus hydrogenoformans (strain ATCC BAA-161 / DSM 6008 / Z-2901).